The sequence spans 634 residues: Chaperone protein HtpG (634 aa).

Positions 1-342 (MTVDTDKQTL…SADLSLNVSR (342 aa)) are a; substrate-binding. The tract at residues 343 to 559 (EILQSGPVVD…QGDLGLQMRQ (217 aa)) is b. Residues 560-634 (LLEASGQAVP…LNKLLLELSA (75 aa)) are c.

The protein belongs to the heat shock protein 90 family. As to quaternary structure, homodimer.

It localises to the cytoplasm. In terms of biological role, molecular chaperone. Has ATPase activity. The polypeptide is Chaperone protein HtpG (Xanthomonas campestris pv. campestris (strain 8004)).